The following is a 188-amino-acid chain: Elongation factor P (188 aa).

The protein belongs to the elongation factor P family.

It localises to the cytoplasm. The protein operates within protein biosynthesis; polypeptide chain elongation. Involved in peptide bond synthesis. Stimulates efficient translation and peptide-bond synthesis on native or reconstituted 70S ribosomes in vitro. Probably functions indirectly by altering the affinity of the ribosome for aminoacyl-tRNA, thus increasing their reactivity as acceptors for peptidyl transferase. The polypeptide is Elongation factor P (Wolbachia pipientis subsp. Culex pipiens (strain wPip)).